Here is a 255-residue protein sequence, read N- to C-terminus: MLHIGGKTFTSRLLLGTGKYPSFEVQKEAVNVSEAEILTFAVRRMNIFEASQPNFLEQLDLSKYTLLPNTAGASTADEAVRIARLAKASGLCDMIKVEVIGCSRSLLPDPVETLKASEMLLEEGFIVLPYTSDDVVLARKLEELGVHAIMPGASPIGSGQGLLNPLNLSFIIEQAKVPVIIDAGVGSPKDAAYAMELGADAVLLNTAVSGAKDPVKMAKAMKLAIESGRLGFEAGRIPLKNYGTASSPQEGMPAF.

The active-site Schiff-base intermediate with DXP is K96. 1-deoxy-D-xylulose 5-phosphate contacts are provided by residues G157, 183 to 184 (AG), and 205 to 206 (NT).

It belongs to the ThiG family. In terms of assembly, homotetramer. Forms heterodimers with either ThiH or ThiS.

The protein localises to the cytoplasm. It carries out the reaction [ThiS sulfur-carrier protein]-C-terminal-Gly-aminoethanethioate + 2-iminoacetate + 1-deoxy-D-xylulose 5-phosphate = [ThiS sulfur-carrier protein]-C-terminal Gly-Gly + 2-[(2R,5Z)-2-carboxy-4-methylthiazol-5(2H)-ylidene]ethyl phosphate + 2 H2O + H(+). Its pathway is cofactor biosynthesis; thiamine diphosphate biosynthesis. Functionally, catalyzes the rearrangement of 1-deoxy-D-xylulose 5-phosphate (DXP) to produce the thiazole phosphate moiety of thiamine. Sulfur is provided by the thiocarboxylate moiety of the carrier protein ThiS. In vitro, sulfur can be provided by H(2)S. This Bacillus pumilus (strain SAFR-032) protein is Thiazole synthase.